The following is a 291-amino-acid chain: Quinol oxidase subunit 2 (291 aa).

A signal peptide spans 1–28; the sequence is MQLKKAFWKLASLLPXSLLLFLGGCDKK. Transmembrane regions (helical) follow at residues 49 to 69 and 91 to 111; these read SFLL…VILI and LEII…IPTV.

The protein belongs to the cytochrome c oxidase subunit 2 family.

It localises to the cell membrane. It catalyses the reaction 2 a quinol + O2 = 2 a quinone + 2 H2O. Catalyzes quinol oxidation with the concomitant reduction of oxygen to water. Subunit II transfers the electrons from a quinol to the binuclear center of the catalytic subunit I. The polypeptide is Quinol oxidase subunit 2 (Bacillus cereus (strain ATCC 10987 / NRS 248)).